The sequence spans 375 residues: Queuine tRNA-ribosyltransferase (375 aa).

D89 functions as the Proton acceptor in the catalytic mechanism. Substrate is bound by residues 89–93 (DSGGF), D143, Q187, and G214. The tract at residues 245 to 251 (GVGKPED) is RNA binding. D264 (nucleophile) is an active-site residue. The interval 269 to 273 (TRNAR) is RNA binding; important for wobble base 34 recognition. Zn(2+) contacts are provided by C302, C304, C307, and H333.

Belongs to the queuine tRNA-ribosyltransferase family. As to quaternary structure, homodimer. Within each dimer, one monomer is responsible for RNA recognition and catalysis, while the other monomer binds to the replacement base PreQ1. It depends on Zn(2+) as a cofactor.

The enzyme catalyses 7-aminomethyl-7-carbaguanine + guanosine(34) in tRNA = 7-aminomethyl-7-carbaguanosine(34) in tRNA + guanine. It functions in the pathway tRNA modification; tRNA-queuosine biosynthesis. In terms of biological role, catalyzes the base-exchange of a guanine (G) residue with the queuine precursor 7-aminomethyl-7-deazaguanine (PreQ1) at position 34 (anticodon wobble position) in tRNAs with GU(N) anticodons (tRNA-Asp, -Asn, -His and -Tyr). Catalysis occurs through a double-displacement mechanism. The nucleophile active site attacks the C1' of nucleotide 34 to detach the guanine base from the RNA, forming a covalent enzyme-RNA intermediate. The proton acceptor active site deprotonates the incoming PreQ1, allowing a nucleophilic attack on the C1' of the ribose to form the product. After dissociation, two additional enzymatic reactions on the tRNA convert PreQ1 to queuine (Q), resulting in the hypermodified nucleoside queuosine (7-(((4,5-cis-dihydroxy-2-cyclopenten-1-yl)amino)methyl)-7-deazaguanosine). The sequence is that of Queuine tRNA-ribosyltransferase from Shigella flexneri serotype 5b (strain 8401).